The primary structure comprises 105 residues: Putative membrane protein insertion efficiency factor (105 aa).

The protein belongs to the UPF0161 family.

It is found in the cell membrane. In terms of biological role, could be involved in insertion of integral membrane proteins into the membrane. This chain is Putative membrane protein insertion efficiency factor, found in Bifidobacterium longum (strain NCC 2705).